Here is a 79-residue protein sequence, read N- to C-terminus: ATP synthase subunit c (79 aa).

A run of 2 helical transmembrane segments spans residues 10–30 (IAGA…IGVL) and 52–72 (FFIV…LAMY).

The protein belongs to the ATPase C chain family. As to quaternary structure, F-type ATPases have 2 components, F(1) - the catalytic core - and F(0) - the membrane proton channel. F(1) has five subunits: alpha(3), beta(3), gamma(1), delta(1), epsilon(1). F(0) has three main subunits: a(1), b(2) and c(10-14). The alpha and beta chains form an alternating ring which encloses part of the gamma chain. F(1) is attached to F(0) by a central stalk formed by the gamma and epsilon chains, while a peripheral stalk is formed by the delta and b chains.

It localises to the cell inner membrane. Functionally, f(1)F(0) ATP synthase produces ATP from ADP in the presence of a proton or sodium gradient. F-type ATPases consist of two structural domains, F(1) containing the extramembraneous catalytic core and F(0) containing the membrane proton channel, linked together by a central stalk and a peripheral stalk. During catalysis, ATP synthesis in the catalytic domain of F(1) is coupled via a rotary mechanism of the central stalk subunits to proton translocation. Key component of the F(0) channel; it plays a direct role in translocation across the membrane. A homomeric c-ring of between 10-14 subunits forms the central stalk rotor element with the F(1) delta and epsilon subunits. This Thiobacillus denitrificans (strain ATCC 25259 / T1) protein is ATP synthase subunit c.